Reading from the N-terminus, the 155-residue chain is Ribosome maturation factor RimP (155 aa).

It belongs to the RimP family.

It localises to the cytoplasm. Required for maturation of 30S ribosomal subunits. The polypeptide is Ribosome maturation factor RimP (Gemmatimonas aurantiaca (strain DSM 14586 / JCM 11422 / NBRC 100505 / T-27)).